The chain runs to 354 residues: Serum paraoxonase/arylesterase 2 (354 aa).

Asparagine 29 carries N-linked (GlcNAc...) asparagine glycosylation. A disulfide bridge connects residues cysteine 42 and cysteine 352. Ca(2+) is bound by residues glutamate 53 and aspartate 54. Histidine 114 serves as the catalytic Proton acceptor. Residues isoleucine 116, asparagine 167, aspartate 168, and asparagine 223 each coordinate Ca(2+). A glycan (N-linked (GlcNAc...) asparagine) is linked at asparagine 254. Ca(2+) contacts are provided by aspartate 268 and asparagine 269. Residues asparagine 269 and asparagine 323 are each glycosylated (N-linked (GlcNAc...) asparagine).

The protein belongs to the paraoxonase family. Ca(2+) serves as cofactor. Glycosylated. Post-translationally, the signal sequence is not cleaved.

The protein resides in the membrane. It carries out the reaction a phenyl acetate + H2O = a phenol + acetate + H(+). The enzyme catalyses An aryl dialkyl phosphate + H2O = dialkyl phosphate + an aryl alcohol.. Functionally, the absence of paraoxonase activity in turkey and chicken blood and in turkey liver indicates that PON2, if expressed, does not hydrolyze paraoxon. This Gallus gallus (Chicken) protein is Serum paraoxonase/arylesterase 2 (PON2).